The sequence spans 393 residues: Fasciculation and elongation protein zeta-1 (393 aa).

The interval 1–41 (MEAPLVSLDEEFEDIRPCCTEDPEEKPQSLYGTSPHHLEDP) is disordered. A Phosphoserine modification is found at S58. The disordered stretch occupies residues 130–154 (NGNSSDTEIHEKEEEDEFIEKSEND). Positions 231–299 (SELTELLDQV…KKRRKEKGLS (69 aa)) form a coiled coil. Phosphoserine occurs at positions 299 and 317.

It belongs to the zygin family. In terms of assembly, homodimer. Interacts with UBE4B and SAP30L. Interacts with SCOC and ULK1; SCOC interferes with ULK1-binding to FEZ1. Directly interacts with SCOC and UVRAG. Stabilizes the interaction between SCOC and UVRAG during amino acid starvation. Interacts with the NH2-terminal variable region (V1) of PKC zeta and weakly with that of PKC epsilon. Phosphorylated by protein kinase C zeta; which enhances interaction with UBE4B and polyubiquitination. In terms of processing, polyubiquitinated in a UBE4B-dependent manner; which does not lead to proteasomal degradation and may be important for neurogenic activity. Polyubiquitin linkage seems to be mainly through Lys-26. In terms of tissue distribution, brain.

The protein resides in the cytoplasm. Its subcellular location is the cytoskeleton. The protein localises to the microtubule organizing center. It is found in the centrosome. It localises to the cell membrane. Its function is as follows. May be involved in axonal outgrowth as component of the network of molecules that regulate cellular morphology and axon guidance machinery. May participate in the transport of mitochondria and other cargos along microtubules. The polypeptide is Fasciculation and elongation protein zeta-1 (Fez1) (Rattus norvegicus (Rat)).